The chain runs to 184 residues: Photosystem I assembly protein Ycf4 (184 aa).

2 helical membrane passes run Asn21–Tyr43 and Gly63–Ser85.

The protein belongs to the Ycf4 family.

Its subcellular location is the plastid. It localises to the chloroplast thylakoid membrane. Seems to be required for the assembly of the photosystem I complex. The chain is Photosystem I assembly protein Ycf4 from Spinacia oleracea (Spinach).